The primary structure comprises 345 residues: Nuclear distribution protein nudE-like 1 (345 aa).

Residues Lys-27–Val-190 are a coiled coil. Positions Val-56–Ser-166 are self-association. Residues Asp-64–Glu-189 form an interaction with KATNB1 region. The segment at Tyr-114–Ile-133 is required for interaction with PAFAH1B1. Residues Arg-175 to Val-345 are interaction with CENPF. Residues Glu-189–Val-256 are interaction with YWHAE. The tract at residues Thr-191–Val-345 is interaction with NEFL. Residues Ala-195–Val-256 form an interaction with KATNA1 region. Ser-215 is modified (phosphoserine). Residues Pro-217–Gly-240 form a disordered region. Thr-219 is subject to Phosphothreonine; by CDK1 and MAPK1. The segment at Asn-227 to Lys-278 is interaction with DISC1. Ser-231 carries the phosphoserine modification. Ser-242 carries the phosphoserine; by CDK1 modification. Thr-245 carries the phosphothreonine; by CDK1 and MAPK1 modification. Residues Val-256–Val-291 form a required for localization to the centrosome and interaction with dynein, dynactin, tubulin gamma, PCM1 and PCNT region. Cys-273 carries the S-palmitoyl cysteine; by ZDHHC2, ZDHHC3 and ZDHHC7 lipid modification. Residues Ala-316–Val-345 are disordered. Residues Leu-329–Gly-339 are compositionally biased toward low complexity. Ser-344 bears the Phosphoserine mark.

This sequence belongs to the nudE family. Self-associates. Interacts with DISC1, dynein, dynactin, tubulin gamma, KATNA1, KATNB1, microtubules, PAFAH1B1, PCM1, PCNT, and YWHAE. Interacts directly with NEFL and indirectly with NEFH. Interacts (via C-terminus) with CENPF. Interacts with ZNF365. Interacts with PLEKHM1 (via N- and C-terminus). Interacts with GTP-bound RAB9A; the interaction may lead to RAB9A-dynein motor tethering. In terms of processing, phosphorylated in mitosis. Can be phosphorylated by CDK1, CDK5 and MAPK1. Phosphorylation by CDK5 promotes interaction with KATNA1 and YWHAE. Post-translationally, palmitoylation at Cys-273 reduces affinity for dynein. In terms of tissue distribution, expressed at low levels in heart, hypothalamus, liver, lung, spleen and stomach. Expressed at higher levels in testis and brain. Within the brain, expressed in cerebellum, cerebral stem, cortex and striatum.

It localises to the cytoplasm. Its subcellular location is the cytoskeleton. The protein localises to the microtubule organizing center. It is found in the centrosome. The protein resides in the chromosome. It localises to the centromere. Its subcellular location is the kinetochore. The protein localises to the spindle. Its function is as follows. Required for organization of the cellular microtubule array and microtubule anchoring at the centrosome. May regulate microtubule organization at least in part by targeting the microtubule severing protein KATNA1 to the centrosome. Also positively regulates the activity of the minus-end directed microtubule motor protein dynein. May enhance dynein-mediated microtubule sliding by targeting dynein to the microtubule plus ends. Required for several dynein- and microtubule-dependent processes such as the maintenance of Golgi integrity, the centripetal motion of secretory vesicles and the coupling of the nucleus and centrosome. Also required during brain development for the migration of newly formed neurons from the ventricular/subventricular zone toward the cortical plate. Plays a role, together with DISC1, in the regulation of neurite outgrowth. Required for mitosis in some cell types but appears to be dispensible for mitosis in cortical neuronal progenitors, which instead requires NDE1. Facilitates the polymerization of neurofilaments from the individual subunits NEFH and NEFL. Positively regulates lysosome peripheral distribution and ruffled border formation in osteoclasts. Plays a role, together with DISC1, in the regulation of neurite outgrowth. May act as a RAB9A/B effector that tethers RAB9-associated late endosomes to the dynein motor for their retrograde transport to the trans-Golgi network. The chain is Nuclear distribution protein nudE-like 1 (NDEL1) from Oryctolagus cuniculus (Rabbit).